Reading from the N-terminus, the 430-residue chain is uncharacterized protein (430 aa).

Helical transmembrane passes span 18–38 (LFLL…NTFV), 49–69 (FIDL…TFYL), 80–100 (VFIL…VLLA), 109–129 (VLIG…FNVL), 145–165 (FMGI…GFVI), 175–195 (TVIF…SFFL), 235–255 (IFVF…LALG), 256–276 (TFGL…SRLI), 285–305 (ILLG…HMSF), 307–327 (TLLT…VPYV), 353–373 (MFLN…VALL), and 377–397 (VGIP…YYFV). The segment at 407 to 430 (GENETMEEDGQKRVTEPTLLKGER) is disordered. Positions 415 to 430 (DGQKRVTEPTLLKGER) are enriched in basic and acidic residues.

The protein localises to the cell membrane. This is an uncharacterized protein from Bacillus subtilis (strain 168).